Consider the following 636-residue polypeptide: Chaperone protein HtpG (636 aa).

The tract at residues 1–342 (MSSETLEFQA…AHDLSLNISR (342 aa)) is a; substrate-binding. The tract at residues 343–558 (ELLQQDRQIQ…AHDVTPTLEK (216 aa)) is b. The segment at 559 to 636 (MYRAMGHEVP…ILAERLARTL (78 aa)) is c.

It belongs to the heat shock protein 90 family. In terms of assembly, homodimer.

Its subcellular location is the cytoplasm. Its function is as follows. Molecular chaperone. Has ATPase activity. In Salinispora tropica (strain ATCC BAA-916 / DSM 44818 / JCM 13857 / NBRC 105044 / CNB-440), this protein is Chaperone protein HtpG.